Consider the following 112-residue polypeptide: Large ribosomal subunit protein bL20c (112 aa).

It belongs to the bacterial ribosomal protein bL20 family.

It is found in the plastid. It localises to the chloroplast. Binds directly to 23S ribosomal RNA and is necessary for the in vitro assembly process of the 50S ribosomal subunit. It is not involved in the protein synthesizing functions of that subunit. This chain is Large ribosomal subunit protein bL20c (rpl20), found in Anthoceros angustus (Hornwort).